A 268-amino-acid polypeptide reads, in one-letter code: Myeloid leukemia factor 1 (268 aa).

Phosphoserine occurs at positions 6, 8, and 32. The segment at 50–125 (RVHNRRGHND…IGDEPPKVFQ (76 aa)) is interaction with COPS3. Positions 208-268 (PGRHNLENTR…KGSSVKSNKK (61 aa)) are disordered. 2 stretches are compositionally biased toward basic and acidic residues: residues 226–237 (PGSRELKRREKP) and 244–257 (EHGRRSDVLGDKLH).

Belongs to the MLF family. In terms of assembly, interacts with CENPU. Also interacts with NRBP1/MADM, YWHAZ/14-3-3-zeta and HNRPUL2/MANP. NRBP1 recruits a serine kinase which phosphorylates both itself and MLF1. Phosphorylated MLF1 then binds to YWHAZ and is retained in the cytoplasm. Retained in the nucleus by binding to HNRPUL2. Binds to COPS3/CSN3 which is required for suppression of COP1 and activation of p53. Post-translationally, phosphorylation is required for binding to YWHAZ.

It is found in the cytoplasm. Its subcellular location is the nucleus. The protein resides in the cell projection. The protein localises to the cilium. It localises to the cytoskeleton. It is found in the cilium basal body. Involved in lineage commitment of primary hemopoietic progenitors by restricting erythroid formation and enhancing myeloid formation. Interferes with erythropoietin-induced erythroid terminal differentiation by preventing cells from exiting the cell cycle through suppression of CDKN1B/p27Kip1 levels. Suppresses COP1 activity via CSN3 which activates p53 and induces cell cycle arrest. Binds DNA and affects the expression of a number of genes so may function as a transcription factor in the nucleus. In Pongo abelii (Sumatran orangutan), this protein is Myeloid leukemia factor 1 (MLF1).